Consider the following 72-residue polypeptide: Dermaseptin-A4 (72 aa).

A signal peptide spans 1–22 (MAFLKKSLFLVLFLGMVSLSIC). A propeptide spanning residues 23-41 (EEEKREEENEQEDDEQSEE) is cleaved from the precursor. The segment at 24–43 (EEKREEENEQEDDEQSEEKR) is disordered. A compositionally biased stretch (acidic residues) spans 30 to 39 (ENEQEDDEQS). Alanine amide is present on Ala69. Residues 71 to 72 (EQ) constitute a propeptide that is removed on maturation.

This sequence belongs to the frog skin active peptide (FSAP) family. Dermaseptin subfamily. As to expression, expressed by the skin glands.

Its subcellular location is the secreted. Possesses a potent antimicrobial activity against Gram-positive and Gram-negative bacteria. Probably acts by disturbing membrane functions with its amphipathic structure. This Agalychnis annae (Blue-sided leaf frog) protein is Dermaseptin-A4.